We begin with the raw amino-acid sequence, 902 residues long: Respiratory burst oxidase homolog protein A (902 aa).

Residues 1-344 lie on the Cytoplasmic side of the membrane; that stretch reads MMNRSEMQKL…KYFLFDNWKR (344 aa). Disordered stretches follow at residues 63–87 and 107–130; these read KSPN…RSGR and ASSV…RRSK. The segment covering 74-87 has biased composition (polar residues); it reads YEDQSLLRQGRSGR. A compositionally biased stretch (low complexity) spans 107-116; that stretch reads ASSVSSSSAR. 2 EF-hand-like regions span residues 163–173 and 198–209; these read TMTTNGLLHRS and ENVSGDSININE. 2 consecutive EF-hand domains span residues 221 to 256 and 265 to 300; these read DFDS…SASA and QADE…APMQ. 5 residues coordinate Ca(2+): D234, D236, D238, R240, and E245. Phosphoserine is present on residues S311 and S315. Residues 345 to 365 form a helical membrane-spanning segment; that stretch reads VWVMALWIGAMAGLFTWKFME. Residues 366 to 380 lie on the Extracellular side of the membrane; sequence YRKRSAYEVMGVCVC. A helical membrane pass occupies residues 381–401; sequence IAKGAAETLKLNMAMILLPVC. In terms of domain architecture, Ferric oxidoreductase spans 383–540; sequence KGAAETLKLN…LFVIVYSLLV (158 aa). Topologically, residues 402 to 428 are cytoplasmic; sequence RNTITWLRTKTKLSAIVPFDDSLNFHK. A helical transmembrane segment spans residues 429–449; sequence VIAIGISVGVGIHATSHLACD. Residues 450 to 484 are Extracellular-facing; that stretch reads FPRLIAADEDQYEPMEKYFGPQTKRYLDFVQSVEG. The helical transmembrane segment at 485–505 threads the bilayer; the sequence is VTGIGMVVLMTIAFTLATTWF. Over 506 to 529 the chain is Cytoplasmic; it reads RRNKLNLPGPLKKITGFNAFWYSH. A helical transmembrane segment spans residues 530 to 550; sequence HLFVIVYSLLVVHGFYVYLII. Over 551 to 709 the chain is Extracellular; it reads EPWYKKTTWM…PAQDYKKFEV (159 aa). One can recognise an FAD-binding FR-type domain in the interval 575 to 703; it reads IRAFRSSVEA…DGPYGAPAQD (129 aa). A helical membrane pass occupies residues 710–730; sequence VLLVGLGIGATPMISIVSDII. The Cytoplasmic portion of the chain corresponds to 731–902; that stretch reads NNLKGVEEGS…TKFIFHKENF (172 aa). Positions 738–760 are disordered; that stretch reads EGSNRRQSPIHNMVTPPVSPSRK.

This sequence belongs to the RBOH (TC 5.B.1.3) family. Monomer and homodimer.

It is found in the membrane. Its function is as follows. Calcium-dependent NADPH oxidase that generates superoxide. The sequence is that of Respiratory burst oxidase homolog protein A (RBOHA) from Arabidopsis thaliana (Mouse-ear cress).